The primary structure comprises 36 residues: Photosystem I reaction center subunit VIII (36 aa).

The helical transmembrane segment at 4 to 24 (FSLPSILVPLVGLVLPAIAMA) threads the bilayer.

It belongs to the PsaI family.

The protein localises to the plastid. Its subcellular location is the chloroplast thylakoid membrane. Its function is as follows. May help in the organization of the PsaL subunit. The sequence is that of Photosystem I reaction center subunit VIII from Piper cenocladum (Ant piper).